The following is a 297-amino-acid chain: Putative thiosulfate sulfurtransferase SseA (297 aa).

Rhodanese domains lie at 31–138 (GAPG…ETTL) and 168–286 (ILGA…VPIV). The active-site Cysteine persulfide intermediate is the Cys-245. Arg-250 provides a ligand contact to substrate.

It catalyses the reaction thiosulfate + hydrogen cyanide = thiocyanate + sulfite + 2 H(+). This Mycobacterium tuberculosis (strain CDC 1551 / Oshkosh) protein is Putative thiosulfate sulfurtransferase SseA (sseA).